The following is a 201-amino-acid chain: Alpha-1-acid glycoprotein 2 (201 aa).

Positions 1 to 18 (MALSWVLTVLSLLPLLEA) are cleaved as a signal peptide. Gln19 carries the pyrrolidone carboxylic acid modification. Cystine bridges form between Cys23–Cys165 and Cys90–Cys183. An N-linked (GlcNAc...) (complex) asparagine glycan is attached at Asn33. Asn56, Asn72, Asn93, and Asn103 each carry an N-linked (GlcNAc...) asparagine glycan.

This sequence belongs to the calycin superfamily. Lipocalin family. Post-translationally, N-glycosylated. N-glycan heterogeneity at Asn-33: Hex5HexNAc4 (minor), Hex6HexNAc5 (major) and dHex1Hex6HexNAc5 (minor). Expressed by the liver and secreted in plasma.

The protein localises to the secreted. Functionally, functions as a transport protein in the blood stream. Binds various hydrophobic ligands in the interior of its beta-barrel domain. Also binds synthetic drugs and influences their distribution and availability. Appears to function in modulating the activity of the immune system during the acute-phase reaction. This chain is Alpha-1-acid glycoprotein 2 (ORM2), found in Homo sapiens (Human).